The sequence spans 129 residues: Large ribosomal subunit protein bL19 (129 aa).

The protein belongs to the bacterial ribosomal protein bL19 family.

In terms of biological role, this protein is located at the 30S-50S ribosomal subunit interface and may play a role in the structure and function of the aminoacyl-tRNA binding site. This is Large ribosomal subunit protein bL19 from Granulibacter bethesdensis (strain ATCC BAA-1260 / CGDNIH1).